The chain runs to 261 residues: Phosphatidylglycerol--prolipoprotein diacylglyceryl transferase (261 aa).

A run of 3 helical transmembrane segments spans residues Leu-20 to Ala-40, Ile-54 to Val-74, and Ile-88 to Val-108. Arg-139 is an a 1,2-diacyl-sn-glycero-3-phospho-(1'-sn-glycerol) binding site. A run of 2 helical transmembrane segments spans residues Met-175 to Phe-195 and Ala-235 to Tyr-255.

Belongs to the Lgt family.

It localises to the cell membrane. The catalysed reaction is L-cysteinyl-[prolipoprotein] + a 1,2-diacyl-sn-glycero-3-phospho-(1'-sn-glycerol) = an S-1,2-diacyl-sn-glyceryl-L-cysteinyl-[prolipoprotein] + sn-glycerol 1-phosphate + H(+). Its pathway is protein modification; lipoprotein biosynthesis (diacylglyceryl transfer). In terms of biological role, catalyzes the transfer of the diacylglyceryl group from phosphatidylglycerol to the sulfhydryl group of the N-terminal cysteine of a prolipoprotein, the first step in the formation of mature lipoproteins. This chain is Phosphatidylglycerol--prolipoprotein diacylglyceryl transferase, found in Lactococcus lactis subsp. cremoris (strain MG1363).